The chain runs to 71 residues: ATP synthase subunit c (71 aa).

Helical transmembrane passes span 9 to 29 and 49 to 69; these read MIGY…IFAA and LLGF…AFVI.

This sequence belongs to the ATPase C chain family. In terms of assembly, F-type ATPases have 2 components, F(1) - the catalytic core - and F(0) - the membrane proton channel. F(1) has five subunits: alpha(3), beta(3), gamma(1), delta(1), epsilon(1). F(0) has three main subunits: a(1), b(2) and c(10-14). The alpha and beta chains form an alternating ring which encloses part of the gamma chain. F(1) is attached to F(0) by a central stalk formed by the gamma and epsilon chains, while a peripheral stalk is formed by the delta and b chains.

Its subcellular location is the cell membrane. F(1)F(0) ATP synthase produces ATP from ADP in the presence of a proton or sodium gradient. F-type ATPases consist of two structural domains, F(1) containing the extramembraneous catalytic core and F(0) containing the membrane proton channel, linked together by a central stalk and a peripheral stalk. During catalysis, ATP synthesis in the catalytic domain of F(1) is coupled via a rotary mechanism of the central stalk subunits to proton translocation. In terms of biological role, key component of the F(0) channel; it plays a direct role in translocation across the membrane. A homomeric c-ring of between 10-14 subunits forms the central stalk rotor element with the F(1) delta and epsilon subunits. This is ATP synthase subunit c from Micrococcus luteus (strain ATCC 4698 / DSM 20030 / JCM 1464 / CCM 169 / CCUG 5858 / IAM 1056 / NBRC 3333 / NCIMB 9278 / NCTC 2665 / VKM Ac-2230) (Micrococcus lysodeikticus).